We begin with the raw amino-acid sequence, 358 residues long: MYGEWGMGNILMMFHVYLVQGFRSEHGPVKDFSFERSSRSMLERSEQQIRAASSLEELLQIAHSEDWKLWRCRLKLKSLASMDSRSASHRSTRFAATFYDTETLKVIDEEWQRTQCSPRETCVEVASELGKTTNTFFKPPCVNVFRCGGCCNEEGVMCMNTSTSYISKQLFEISVPLTSVPELVPVKIANHTGCKCLPTGPRHPYSIIRRSIQTPEEDECPHSKKLCPIDMLWDNTKCKCVLQDETPLPGTEDHSYLQEPTLCGPHMTFDEDRCECVCKAPCPGDLIQHPENCSCFECKESLESCCQKHKIFHPDTCSCEDRCPFHTRTCASRKPACGKHWRFPKETRAQGLYSQENP.

The N-terminal stretch at methionine 1–glycine 21 is a signal peptide. Positions phenylalanine 22–arginine 93 are excised as a propeptide. 3 cysteine pairs are disulfide-bonded: cysteine 116–cysteine 158, cysteine 147–cysteine 194, and cysteine 151–cysteine 196. 2 N-linked (GlcNAc...) asparagine glycosylation sites follow: asparagine 160 and asparagine 190. Positions serine 211–proline 358 are excised as a propeptide. The 1; approximate repeat unit spans residues cysteine 227–leucine 242. The segment at cysteine 227–cysteine 323 is 4 X 16 AA repeats of C-X(10)-C-X-C-X(1,3)-C. A run of 3 repeats spans residues cysteine 263–cysteine 278, cysteine 282–cysteine 298, and cysteine 306–cysteine 323. Asparagine 292 carries N-linked (GlcNAc...) asparagine glycosylation.

Belongs to the PDGF/VEGF growth factor family. In terms of assembly, homodimer; non-covalent and antiparallel. Undergoes a complex proteolytic maturation which generates a variety of processed secreted forms with increased activity toward VEGFR-3 and VEGFR-2. VEGF-D first form an antiparallel homodimer linked by disulfide bonds before secretion. The fully processed VEGF-D is composed mostly of two VEGF homology domains (VHDs) bound by non-covalent interactions. As to expression, highly expressed in fetal and adult lung.

Its subcellular location is the secreted. Its function is as follows. Growth factor active in angiogenesis, lymphangiogenesis and endothelial cell growth, stimulating their proliferation and migration and also has effects on the permeability of blood vessels. May function in the formation of the venous and lymphatic vascular systems during embryogenesis, and also in the maintenance of differentiated lymphatic endothelium in adults. Binds and activates VEGFR-3 (Flt4) receptor. The protein is Vascular endothelial growth factor D of Mus musculus (Mouse).